We begin with the raw amino-acid sequence, 266 residues long: MRKSLLALSLLAATSAPVLAADYSDGDIHKNDYKWMQFNLMGAFDELPGESSHDYLEMEFGGRSGIFDLYGYVDVFNLASDKGSDKVGDPKIFMKFAPRMSIDGLTGKDLSFGPVQELYVATLFEWDGTDYKTNPFSVNNQKVGIGSDVMVPWFGKVGVNLYGTYQGNQKDWNGFQISTNWFKPFYFFENGSFISYQGYIDYQFGMKEKYSSASNGGAMFNGIYWHSDRFAVGYGLKGYKDVYGIKDSDALKSTGFGHYVAVTYKF.

Positions 1–20 (MRKSLLALSLLAATSAPVLA) are cleaved as a signal peptide.

This sequence belongs to the nucleoside-specific channel-forming outer membrane porin (Tsx) (TC 1.B.10) family.

The protein localises to the cell outer membrane. Serves as receptor for a broad-host-range vibriophage, KVP40. This chain is Outer membrane protein OmpK (ompK), found in Vibrio parahaemolyticus serotype O3:K6 (strain RIMD 2210633).